A 490-amino-acid chain; its full sequence is Betaine aldehyde dehydrogenase (490 aa).

K(+) contacts are provided by Ser-26, Ile-27, and Asp-93. Residue 150–152 (GAW) coordinates NAD(+). Lys-162 acts as the Charge relay system in catalysis. NAD(+) is bound by residues 176 to 179 (KPSE) and 230 to 233 (GVET). Position 246 (Leu-246) interacts with K(+). The active-site Proton acceptor is the Glu-252. 3 residues coordinate NAD(+): Gly-254, Cys-286, and Glu-387. The active-site Nucleophile is Cys-286. Cys-286 carries the cysteine sulfenic acid (-SOH) modification. K(+) contacts are provided by Lys-457 and Gly-460. The active-site Charge relay system is the Glu-464.

The protein belongs to the aldehyde dehydrogenase family. In terms of assembly, dimer of dimers. Requires K(+) as cofactor.

The enzyme catalyses betaine aldehyde + NAD(+) + H2O = glycine betaine + NADH + 2 H(+). The protein operates within amine and polyamine biosynthesis; betaine biosynthesis via choline pathway; betaine from betaine aldehyde: step 1/1. In terms of biological role, involved in the biosynthesis of the osmoprotectant glycine betaine. Catalyzes the irreversible oxidation of betaine aldehyde to the corresponding acid. The chain is Betaine aldehyde dehydrogenase from Acinetobacter baumannii (strain SDF).